The primary structure comprises 142 residues: Hemoglobin A subunit alpha-2 (142 aa).

In terms of domain architecture, Globin spans 2-142 (VLTAGDKANV…VAQNLTSKYR (141 aa)). An O2-binding site is contributed by His59. Residue His88 coordinates heme b.

The protein belongs to the globin family. Tetramer of alpha-1, alpha-2 and two identical beta chains. As to expression, red blood cells.

In terms of biological role, involved in oxygen transport from the lung to the various peripheral tissues. This is Hemoglobin A subunit alpha-2 from Aldabrachelys gigantea (Aldabra giant tortoise).